The primary structure comprises 1316 residues: DNA-directed RNA polymerase subunit beta' (1316 aa).

Residues Cys60, Cys62, Cys75, and Cys78 each contribute to the Zn(2+) site. Asp535, Asp537, and Asp539 together coordinate Mg(2+). Residues Cys891, Cys968, Cys975, and Cys978 each coordinate Zn(2+).

The protein belongs to the RNA polymerase beta' chain family. As to quaternary structure, the RNAP catalytic core consists of 2 alpha, 1 beta, 1 beta' and 1 omega subunit. When a sigma factor is associated with the core the holoenzyme is formed, which can initiate transcription. The cofactor is Mg(2+). Requires Zn(2+) as cofactor.

It carries out the reaction RNA(n) + a ribonucleoside 5'-triphosphate = RNA(n+1) + diphosphate. DNA-dependent RNA polymerase catalyzes the transcription of DNA into RNA using the four ribonucleoside triphosphates as substrates. The chain is DNA-directed RNA polymerase subunit beta' from Mycobacterium avium (strain 104).